Here is a 455-residue protein sequence, read N- to C-terminus: Ribulose bisphosphate carboxylase large chain (455 aa).

Lysine 5 is modified (N6,N6,N6-trimethyllysine). Residues asparagine 114 and threonine 164 each contribute to the substrate site. Lysine 166 acts as the Proton acceptor in catalysis. Lysine 168 lines the substrate pocket. Lysine 192, aspartate 194, and glutamate 195 together coordinate Mg(2+). Residue lysine 192 is modified to N6-carboxylysine. Histidine 285 functions as the Proton acceptor in the catalytic mechanism. Substrate contacts are provided by arginine 286, histidine 318, and serine 370.

This sequence belongs to the RuBisCO large chain family. Type I subfamily. Heterohexadecamer of 8 large chains and 8 small chains; disulfide-linked. The disulfide link is formed within the large subunit homodimers. The cofactor is Mg(2+). In terms of processing, the disulfide bond which can form in the large chain dimeric partners within the hexadecamer appears to be associated with oxidative stress and protein turnover.

The protein resides in the plastid. It localises to the chloroplast. The catalysed reaction is 2 (2R)-3-phosphoglycerate + 2 H(+) = D-ribulose 1,5-bisphosphate + CO2 + H2O. The enzyme catalyses D-ribulose 1,5-bisphosphate + O2 = 2-phosphoglycolate + (2R)-3-phosphoglycerate + 2 H(+). RuBisCO catalyzes two reactions: the carboxylation of D-ribulose 1,5-bisphosphate, the primary event in carbon dioxide fixation, as well as the oxidative fragmentation of the pentose substrate in the photorespiration process. Both reactions occur simultaneously and in competition at the same active site. This Erythrina crista-galli (Cockspur coral tree) protein is Ribulose bisphosphate carboxylase large chain.